The chain runs to 569 residues: Cytochrome P450 monooxygenase abl1 (569 aa).

Cysteine 464 contacts heme.

This sequence belongs to the cytochrome P450 family. Requires heme as cofactor.

Its pathway is hormone biosynthesis. Functionally, cytochrome P450 monooxygenase; part of the gene cluster that mediates the biosynthesis of abscisic acid (ABA), a phytohormone that acts antagonistically toward salicylic acid (SA), jasmonic acid (JA) and ethylene (ETH) signaling, to impede plant defense responses. The first step of the pathway catalyzes the reaction from farnesyl diphosphate to alpha-ionylideneethane performed by the alpha-ionylideneethane synthase abl3 via a three-step reaction mechanism involving 2 neutral intermediates, beta-farnesene and allofarnesene. The cytochrome P450 monooxygenase abl1 might then be involved in the conversion of alpha-ionylideneethane to alpha-ionylideneacetic acid. Alpha-ionylideneacetic acid is further converted to abscisic acid in 2 steps involving the cytochrome P450 monooxygenase abl2 and the short-chain dehydrogenase/reductase abl4, via the intermediates 1'-deoxy-ABA or 1',4'-trans-diol-ABA, depending on the order of action of these 2 enzymes. Abl2 is responsible for the hydroxylation of carbon atom C-1' and abl4 might be involved in the oxidation of the C-4' carbon atom. This is Cytochrome P450 monooxygenase abl1 from Leptosphaeria maculans (strain JN3 / isolate v23.1.3 / race Av1-4-5-6-7-8) (Blackleg fungus).